The following is an 879-amino-acid chain: Alanine--tRNA ligase (879 aa).

Residues His566, His570, Cys668, and His672 each coordinate Zn(2+).

This sequence belongs to the class-II aminoacyl-tRNA synthetase family. It depends on Zn(2+) as a cofactor.

Its subcellular location is the cytoplasm. The catalysed reaction is tRNA(Ala) + L-alanine + ATP = L-alanyl-tRNA(Ala) + AMP + diphosphate. Its function is as follows. Catalyzes the attachment of alanine to tRNA(Ala) in a two-step reaction: alanine is first activated by ATP to form Ala-AMP and then transferred to the acceptor end of tRNA(Ala). Also edits incorrectly charged Ser-tRNA(Ala) and Gly-tRNA(Ala) via its editing domain. The polypeptide is Alanine--tRNA ligase (Clostridium tetani (strain Massachusetts / E88)).